A 422-amino-acid chain; its full sequence is S-adenosylmethionine synthase (422 aa).

His-15 is a binding site for ATP. Mg(2+) is bound at residue Asp-17. Glu-43 lines the K(+) pocket. Glu-56 and Gln-99 together coordinate L-methionine. The interval 99-109 (QSPDISRGVTE) is flexible loop. ATP contacts are provided by residues 166–168 (DGK), 232–233 (RF), Asp-241, 247–248 (RK), Ala-264, and Lys-268. Position 241 (Asp-241) interacts with L-methionine. Residue Lys-272 coordinates L-methionine. The tract at residues 390–422 (AVPATTNGAGSKNGSGSKKEPKRKGKKETGAQA) is disordered.

The protein belongs to the AdoMet synthase family. As to quaternary structure, homotetramer; dimer of dimers. Mg(2+) is required as a cofactor. Requires K(+) as cofactor.

It localises to the cytoplasm. It catalyses the reaction L-methionine + ATP + H2O = S-adenosyl-L-methionine + phosphate + diphosphate. It functions in the pathway amino-acid biosynthesis; S-adenosyl-L-methionine biosynthesis; S-adenosyl-L-methionine from L-methionine: step 1/1. Its function is as follows. Catalyzes the formation of S-adenosylmethionine (AdoMet) from methionine and ATP. The overall synthetic reaction is composed of two sequential steps, AdoMet formation and the subsequent tripolyphosphate hydrolysis which occurs prior to release of AdoMet from the enzyme. The sequence is that of S-adenosylmethionine synthase from Sorangium cellulosum (strain So ce56) (Polyangium cellulosum (strain So ce56)).